Here is a 198-residue protein sequence, read N- to C-terminus: Probable GTP-binding protein EngB (198 aa).

The EngB-type G domain maps to 22–197 (TLPEYAFIGR…LDYIEGINNS (176 aa)). Residues 30–37 (GRSNVGKS), 57–61 (GKTQL), 75–78 (DLPG), 142–145 (TKAD), and 175–178 (ITSA) contribute to the GTP site. Ser-37 and Thr-59 together coordinate Mg(2+).

Belongs to the TRAFAC class TrmE-Era-EngA-EngB-Septin-like GTPase superfamily. EngB GTPase family. Mg(2+) is required as a cofactor.

Functionally, necessary for normal cell division and for the maintenance of normal septation. The protein is Probable GTP-binding protein EngB of Christiangramia forsetii (strain DSM 17595 / CGMCC 1.15422 / KT0803) (Gramella forsetii).